A 206-amino-acid chain; its full sequence is Orotate phosphoribosyltransferase (206 aa).

5-phospho-alpha-D-ribose 1-diphosphate is bound by residues Arg97, Lys98, Lys101, and 125–133 (NDVIASGRS). Arg157 is a binding site for orotate.

It belongs to the purine/pyrimidine phosphoribosyltransferase family. PyrE subfamily. As to quaternary structure, homodimer. Mg(2+) is required as a cofactor.

The enzyme catalyses orotidine 5'-phosphate + diphosphate = orotate + 5-phospho-alpha-D-ribose 1-diphosphate. It functions in the pathway pyrimidine metabolism; UMP biosynthesis via de novo pathway; UMP from orotate: step 1/2. In terms of biological role, catalyzes the transfer of a ribosyl phosphate group from 5-phosphoribose 1-diphosphate to orotate, leading to the formation of orotidine monophosphate (OMP). This Chlamydia caviae (strain ATCC VR-813 / DSM 19441 / 03DC25 / GPIC) (Chlamydophila caviae) protein is Orotate phosphoribosyltransferase.